A 421-amino-acid chain; its full sequence is D-amino acid dehydrogenase (421 aa).

3–17 (VIVLGSGVIGVASAY) lines the FAD pocket.

Belongs to the DadA oxidoreductase family. Requires FAD as cofactor.

The catalysed reaction is a D-alpha-amino acid + A + H2O = a 2-oxocarboxylate + AH2 + NH4(+). The protein operates within amino-acid degradation; D-alanine degradation; NH(3) and pyruvate from D-alanine: step 1/1. Oxidative deamination of D-amino acids. This Acinetobacter baumannii (strain SDF) protein is D-amino acid dehydrogenase.